A 621-amino-acid chain; its full sequence is ATP-dependent lipid A-core flippase (621 aa).

5 helical membrane passes run 32–52 (IVAA…LAAF), 91–111 (VWGT…LVVI), 192–212 (IVLL…FPLL), 286–306 (SPFS…IALW), and 312–332 (YTTI…YAPI). One can recognise an ABC transmembrane type-1 domain in the interval 33-344 (VAALIAIFGV…LANISIPMQT (312 aa)). The 234-residue stretch at 378–611 (FRNVDVEYRS…NGYYTMLRNI (234 aa)) folds into the ABC transporter domain. 410 to 417 (GRSGSGKS) contacts ATP.

Belongs to the ABC transporter superfamily. Lipid exporter (TC 3.A.1.106) family. In terms of assembly, homodimer.

Its subcellular location is the cell inner membrane. The enzyme catalyses ATP + H2O + lipid A-core oligosaccharideSide 1 = ADP + phosphate + lipid A-core oligosaccharideSide 2.. In terms of biological role, involved in lipopolysaccharide (LPS) biosynthesis. Translocates lipid A-core from the inner to the outer leaflet of the inner membrane. Transmembrane domains (TMD) form a pore in the inner membrane and the ATP-binding domain (NBD) is responsible for energy generation. The chain is ATP-dependent lipid A-core flippase from Neisseria meningitidis serogroup A / serotype 4A (strain DSM 15465 / Z2491).